A 354-amino-acid chain; its full sequence is Rhodopsin (354 aa).

Residues 1-36 (MNGTEGPNFYIPMSNKTGVVRSPFDYPQYYLAEPWK) are Extracellular-facing. The N-linked (GlcNAc...) (hybrid) asparagine glycan is linked to Asn2. Asn15 is a glycosylation site (N-linked (GlcNAc...) asparagine). Residues 37 to 61 (YSVLAAYMFLLILLGLPINFMTLYV) traverse the membrane as a helical segment. Residues 62 to 73 (TIQHKKLRTPLN) are Cytoplasmic-facing. Residues 74–96 (YILLNLGVCNHFMVLCGFTITMY) traverse the membrane as a helical segment. The Extracellular portion of the chain corresponds to 97 to 110 (TSLHGYFVFGQTGC). Cys110 and Cys187 form a disulfide bridge. A helical transmembrane segment spans residues 111–133 (YFEGFFATLGGEIALWSLVVLAI). A 'Ionic lock' involved in activated form stabilization motif is present at residues 134–136 (ERY). Residues 134-152 (ERYIVVCKPMSNFRFGENH) lie on the Cytoplasmic side of the membrane. A helical membrane pass occupies residues 153–173 (AMMGVAFTWIMALACAVPPLF). Residues 174–202 (GWSRYIPEGMQCSCGVDYYTLKPEVNNES) lie on the Extracellular side of the membrane. Residues 203–224 (FVIYMFVVHFLIPLIIISFCYG) traverse the membrane as a helical segment. Over 225 to 252 (RLVCTVKEAAAQQQESATTQKAEKEVTR) the chain is Cytoplasmic. A helical membrane pass occupies residues 253–274 (MVIIMVIFFLICWVPYAYVAFY). Residues 275–286 (IFTHQGSEFGPI) are Extracellular-facing. Residues 287–308 (FMTVPAFFAKSSAIYNPVIYIM) traverse the membrane as a helical segment. The residue at position 296 (Lys296) is an N6-(retinylidene)lysine. Residues 309 to 354 (LNKQFRNCMITTLCCGKNPFGDDDASSAATSKTEATSVSTSQVSPA) are Cytoplasmic-facing. Residues Cys322 and Cys323 are each lipidated (S-palmitoyl cysteine). The disordered stretch occupies residues 332 to 354 (DASSAATSKTEATSVSTSQVSPA). Low complexity predominate over residues 334–354 (SSAATSKTEATSVSTSQVSPA).

It belongs to the G-protein coupled receptor 1 family. Opsin subfamily. Contains one covalently linked retinal chromophore. Upon light absorption, the covalently bound 11-cis-retinal is converted to all-trans-retinal. After hydrolysis of the Schiff base and release of the covalently bound all-trans-retinal, active rhodopsin is regenerated by binding of a fresh molecule of 11-cis-retinal. Detected in retina rod photoreceptor cell outer segments (at protein level). Detected in retina.

Its subcellular location is the membrane. It is found in the cell projection. The protein localises to the cilium. It localises to the photoreceptor outer segment. Functionally, photoreceptor required for image-forming vision at low light intensity. Required for photoreceptor cell viability after birth. Light-induced isomerization of 11-cis to all-trans retinal triggers a conformational change that activates signaling via G-proteins. Subsequent receptor phosphorylation mediates displacement of the bound G-protein alpha subunit by arrestin and terminates signaling. The polypeptide is Rhodopsin (RHO) (Lithobates pipiens (Northern leopard frog)).